Reading from the N-terminus, the 1156-residue chain is Pesticidal crystal protein Cry9Aa (1156 aa).

The propeptide at 1–23 (MNQNKHGIIGASNCGCASDDVAK) is removed in mature form.

The protein belongs to the delta endotoxin family.

Promotes colloidosmotic lysis by binding to the midgut epithelial cells of insects. This protein is toxic to Galleria mellonella. The polypeptide is Pesticidal crystal protein Cry9Aa (cry9Aa) (Bacillus thuringiensis subsp. galleriae).